Here is a 476-residue protein sequence, read N- to C-terminus: UDP-N-acetylmuramate--L-alanine ligase (476 aa).

121–127 is a binding site for ATP; it reads GAHGKTT.

It belongs to the MurCDEF family.

The protein localises to the cytoplasm. It carries out the reaction UDP-N-acetyl-alpha-D-muramate + L-alanine + ATP = UDP-N-acetyl-alpha-D-muramoyl-L-alanine + ADP + phosphate + H(+). It functions in the pathway cell wall biogenesis; peptidoglycan biosynthesis. Its function is as follows. Cell wall formation. The chain is UDP-N-acetylmuramate--L-alanine ligase from Clavibacter sepedonicus (Clavibacter michiganensis subsp. sepedonicus).